Reading from the N-terminus, the 4001-residue chain is Ankyrin repeat and KH domain-containing protein mask (4001 aa).

The span at 1-14 (MNNDAKNHESDDLN) shows a compositional bias: basic and acidic residues. 3 disordered regions span residues 1-61 (MNND…NRQL), 91-174 (KNEP…GGGS), and 391-494 (DTDT…FLLD). Polar residues predominate over residues 15-30 (VRSTAYFNQQTTTNQP). A compositionally biased stretch (low complexity) spans 38–61 (NNTGSGSGSNNNNNNTNQNPNRQL). Polar residues predominate over residues 94-117 (PLTTTESSGVLTNTPLPSNSRLKV). Positions 118 to 159 (NNNNNTNNTAKMSGTSSSQSSATPTPPTASSSTTTTTTTNIS) are enriched in low complexity. A compositionally biased stretch (gly residues) spans 160 to 174 (TGGGGSGSSGGGGGS). Acidic residues-rich tracts occupy residues 408–425 (SESEEESVSEDDIPESDP) and 434–486 (VRED…EDAP). At Ser501 the chain carries Phosphoserine. 15 ANK repeats span residues 546-575 (SGFSRSLVAACTDNDVNTVKRLLCKGNVNL), 584-614 (DGESLLSMACSAGYYELAQVLLAMSAAQVED), 618-647 (KDSTPLMEAASAGHLDIVKLLLNHNADVNA), 651-680 (TGNTPLMFACAGGQVDVVKVLLKHGANVEE), 684-713 (NGHTPLMEAASAGHVEVAKVLLEHGAGINT), 718-747 (FKESALTLACYKGHLDMVRFLLQAGADQEH), 751-780 (EMHTALMEASMDGHVEVARLLLDSGAQVNM), 784-813 (SFESPLTLAACGGHVELATLLIERGANIEE), 817-846 (EGYTPLMEAAREGHEEMVALLLSKGANINA), 851-880 (TQETALTLACCGGFMEVAAFLIKEGANLEL), 881-910 (GASTPLMEASQEGHTDLVSFLLKKKANVHA), 914-943 (TGDTALTHACENGHTDAAGVLLSYGAELEH), 947-976 (GGRTPLMKACRAGHLCTVKFLIQKGANVNK), 981-1011 (NDHTALSLACAGGHQSVVELLLKNNADPFHK), and 1014-1043 (DNSTMLIEASKGGHTRVVELLFRYPNISPT). 2 disordered regions span residues 1046-1067 (AASANVTQAAPTSNQPGPNQMR) and 1306-1376 (QPGE…PTAL). A compositionally biased stretch (polar residues) spans 1367 to 1376 (DNNQPVPTAL). 2 positions are modified to phosphoserine: Ser1389 and Ser1588. Disordered stretches follow at residues 1583-1612 (GDQPKSPTETPPEMEETTMSSPTEADRLGS), 1646-1669 (SDLESECEDDAEGGAGADCEENTL), 1682-1779 (EDGI…SLPL), 1852-1872 (VVHQKQQHGEGDQQCEDDGSA), 2084-2108 (MAQHQAQQQQGVGEPLTEQQQQQLH), and 2225-2256 (TPAPSSGVSSTKSMPGGIAKKAIDKQSRKERR). Acidic residues-rich tracts occupy residues 1646–1657 (SDLESECEDDAE), 1685–1704 (IIVEEEEDDEEEDDDDEEQD), and 1716–1759 (DDED…EPDS). The span at 1760–1776 (DQGTGNNNNNSKSGASS) shows a compositional bias: low complexity. The span at 2084–2093 (MAQHQAQQQQ) shows a compositional bias: low complexity. Over residues 2228-2237 (PSSGVSSTKS) the composition is skewed to polar residues. ANK repeat units follow at residues 2312–2341 (NHDTALTLACAGGHEELVELLINRGANIEH), 2345–2374 (KGFTPLILAATAGHDKVVDILLKHSAELEA), 2379–2408 (TKDTPLSLACSGGRYEVVELLLSVGANKEH), 2412–2441 (SDYTPLSLAASGGYVNIIKLLLSHGAEINS), 2447–2476 (LGISPLMLAAMNGHTPAVKLLLDQGSDINA), 2481–2510 (NRNTALTLACFQGRHEVVSLLLDRRANVEH), 2514–2543 (TGLTPLMEAASGGYIEVGRVLLDKGADVNA), 2549–2578 (SRDTALTIAADKGHQKFVELLLSRNASVEV), 2582–2611 (KGNSPLWLAAHGGHLSVVELLYDHNADIDS), and 2615–2644 (RRVSCLMAAFRKGHTKIVKWMVQYVSQFPS). Positions 2674–2732 (AKEAQAVKANKNASILLEELDLERTREESRKAAAARRRERKKKKKMEKKEEKRRQQQGN) form a coiled coil. Residue Ser2687 is modified to Phosphoserine. Thr2698 carries the post-translational modification Phosphothreonine. A disordered region spans residues 2699 to 3033 (REESRKAAAA…TSTTTAASSV (335 aa)). Residues 2706–2719 (AAARRRERKKKKKM) show a composition bias toward basic residues. Positions 2739–2762 (MQGDDDDASDKDDDSDKDDEDEEA) are enriched in acidic residues. Phosphoserine occurs at positions 2747 and 2753. Over residues 2793–2810 (SQSAQAAEAAANSVSTNS) the composition is skewed to low complexity. Polar residues predominate over residues 2828–2839 (EPTQPVITSNSV). A compositionally biased stretch (basic and acidic residues) spans 2868–2886 (RQLDVKKEEPALKKKEEKN). Over residues 2906 to 2941 (ALPAKQQPSSSSKLQSSESASNINSSTATNTSSANT) the composition is skewed to low complexity. The segment covering 2950-2960 (ASQTASATTLN) has biased composition (polar residues). The segment covering 2963–2975 (KRTEVDGWKEVVR) has biased composition (basic and acidic residues). Residues 2995 to 3004 (TATSSATSVQ) are compositionally biased toward polar residues. Positions 3012–3032 (ANSSSNSSSSLTTSTTTAASS) are enriched in low complexity. The KH domain maps to 3036-3100 (MTCKKVQVPV…DATKQAHMLI (65 aa)). Low complexity-rich tracts occupy residues 3156 to 3178 (ASTTSTSSSSSASSTTPAGASYS), 3195 to 3227 (SGRSSTSVKSNGSSTKVSASSGSGSRSGRAGSS), and 3244 to 3257 (NGVIKSKSESSSKS). Disordered stretches follow at residues 3156–3329 (ASTT…GQGG), 3383–3457 (KPIA…QTSQ), 3520–3636 (AVGD…PPTA), and 3744–3786 (IFPQ…GGAA). The segment covering 3262–3278 (QKSSTTLGKSSTVSPGA) has biased composition (polar residues). Positions 3396–3416 (GSPTQVQQQHQTQQQQQQQLP) are enriched in low complexity. Pro residues predominate over residues 3417 to 3427 (QPAPVPGPQPQ). Residues 3428-3457 (QQPLQQQQQQQAPQQQPQQPNQQQQPQTSQ) are compositionally biased toward low complexity. A compositionally biased stretch (polar residues) spans 3539 to 3559 (NILSSPVGSSKASSNHSTSPP). Residues 3565-3577 (QQQQQQQPQSSQQ) show a composition bias toward low complexity. Residue Ser3596 is modified to Phosphoserine. The segment covering 3774–3786 (PPGTGARQPGGAA) has biased composition (low complexity). Phosphoserine is present on residues Ser3820, Ser3822, and Ser3825. Residues 3876–3945 (KAQPPGLQQP…HNMQAPPNMS (70 aa)) form a disordered region. Positions 3891-3910 (SQQQQQQPLNWLKQQPQQQQ) are enriched in low complexity.

As to quaternary structure, may interact with Unc-89 (via protein kinase domain 1 or 2). As to expression, expressed ubiquitously in eye imaginal disk, slightly higher expression is seen in presumptive photoreceptors. Expressed in indirect flight muscle (IFM) (at protein level).

The protein localises to the cytoplasm. It is found in the myofibril. It localises to the sarcomere. Its subcellular location is the z line. The protein resides in the m line. Mediator of receptor tyrosine kinase (RTK) signaling, and may act either downstream of MAPK or transduce signaling through a parallel branch of the RTK pathway. Required for the development and organization of indirect flight muscle sarcomeres by regulating the formation of M line and H zone and the correct assembly of thick and thin filaments in the sarcomere. This Drosophila melanogaster (Fruit fly) protein is Ankyrin repeat and KH domain-containing protein mask.